A 476-amino-acid chain; its full sequence is Cytosolic iron-sulfur assembly component 3 (476 aa).

Ala2 is modified (N-acetylalanine). [4Fe-4S] cluster contacts are provided by Cys24, Cys71, Cys74, Cys77, Cys190, Cys246, Cys395, and Cys399.

The protein belongs to the NARF family. In terms of assembly, external component of the CIA complex. In the CIA complex, interacts directly with CIAO1 and MMS19.

In terms of biological role, component of the cytosolic iron-sulfur protein assembly (CIA) complex, a multiprotein complex that mediates the incorporation of iron-sulfur cluster into extramitochondrial Fe/S proteins. Seems to negatively regulate the level of HIF1A expression, although this effect could be indirect. This Rattus norvegicus (Rat) protein is Cytosolic iron-sulfur assembly component 3.